The chain runs to 39 residues: Photosystem II reaction center protein L (39 aa).

Residues 18–38 (SLYLGLLLVAVLGILFSSYFF) form a helical membrane-spanning segment.

The protein belongs to the PsbL family. As to quaternary structure, PSII is composed of 1 copy each of membrane proteins PsbA, PsbB, PsbC, PsbD, PsbE, PsbF, PsbH, PsbI, PsbJ, PsbK, PsbL, PsbM, PsbT, PsbX, PsbY, PsbZ, Psb30/Ycf12, peripheral proteins PsbO, CyanoQ (PsbQ), PsbU, PsbV and a large number of cofactors. It forms dimeric complexes.

It localises to the cellular thylakoid membrane. Functionally, one of the components of the core complex of photosystem II (PSII). PSII is a light-driven water:plastoquinone oxidoreductase that uses light energy to abstract electrons from H(2)O, generating O(2) and a proton gradient subsequently used for ATP formation. It consists of a core antenna complex that captures photons, and an electron transfer chain that converts photonic excitation into a charge separation. This subunit is found at the monomer-monomer interface and is required for correct PSII assembly and/or dimerization. This chain is Photosystem II reaction center protein L, found in Microcystis aeruginosa (strain NIES-843 / IAM M-2473).